The primary structure comprises 600 residues: MTKENLENELKTLPNSAGVYQYFNQEGKLLYVGKAKNLKNRVKSYFAFTPNLHANPRNSLRIQKMIEETVHLEFITTNSEADALILENSFIKQLHPKYNILLRDDKTYPYIYVDFEEEFPRFEITRKLVKKSKIKYFGPFFKGARELLDALYLYYPLKQKASCKSPCIFYQISRCLAPCDKRISREKYLEILDEAMHALLNPSILIKNLEKQMLVLAQNENYEEAAKVRDQIVTIKDLEVKVEIDIAKLEDFEVFALAFENSMLSTLRFVVQNGKIISVNSKITPIKNDIQWDKNEIYKQLILENFSMDIPLLANVIYVYEEFEDRMLLEEILSQRFDKKISIKIPKIGEKRRICDLAFQNALLNIEKEQKNHDFTIQKELKSYFELENLPNDIEIFDNSHLQGVANVGAMVTYSANSWDKSKYRKFHLKHKNDYDQMREVLMRRALDFDKIPPPDLWLIDGGKALLDLAKEIIVSSGANVDILAISKEKIDAKAHRAKGGARDKIHSLKGEFSLSINDKKLQFLQKLRDEAHRFAISFHQNTKKKQDLNSSKLVNLGLSSGVIQKLLAYYGNFESIYKADFKDLAMLVGKKVAQKIKEN.

The 86-residue stretch at asparagine 15 to isoleucine 100 folds into the GIY-YIG domain. One can recognise a UVR domain in the interval serine 203–leucine 238.

Belongs to the UvrC family. In terms of assembly, interacts with UvrB in an incision complex.

It is found in the cytoplasm. In terms of biological role, the UvrABC repair system catalyzes the recognition and processing of DNA lesions. UvrC both incises the 5' and 3' sides of the lesion. The N-terminal half is responsible for the 3' incision and the C-terminal half is responsible for the 5' incision. This is UvrABC system protein C from Campylobacter jejuni subsp. jejuni serotype O:6 (strain 81116 / NCTC 11828).